Reading from the N-terminus, the 329-residue chain is Protoheme IX farnesyltransferase (329 aa).

A run of 7 helical transmembrane segments spans residues 61-81 (LACT…LNCL), 108-128 (AFLI…AGVN), 130-150 (LAAG…TIVL), 158-178 (IVIG…AATG), 186-206 (WLFG…ALLL), 243-263 (LLGV…VLPF), and 284-304 (AKGL…LLLL).

The protein belongs to the UbiA prenyltransferase family. Protoheme IX farnesyltransferase subfamily.

It is found in the cell inner membrane. It catalyses the reaction heme b + (2E,6E)-farnesyl diphosphate + H2O = Fe(II)-heme o + diphosphate. It participates in porphyrin-containing compound metabolism; heme O biosynthesis; heme O from protoheme: step 1/1. Functionally, converts heme B (protoheme IX) to heme O by substitution of the vinyl group on carbon 2 of heme B porphyrin ring with a hydroxyethyl farnesyl side group. The chain is Protoheme IX farnesyltransferase from Synechococcus sp. (strain RCC307).